We begin with the raw amino-acid sequence, 348 residues long: MGHCYYNETIGFFYNNSGKELSSHWRPKDVVVVALGLTVSVLVLLTNLLVIAAIASNRRFHQPIYYLLGNLAAADLFAGVAYLFLMFHTGPRTARLSLEGWFLRQGLLDTSLTASVATLLAIAVERRRSVMAVQLHSRLPRGRVVMLIVGVWVAALGLGLLPAHSWHCLCALDRCSRMAPLLSRSYLAVWALSSLLVFLLMVAVYTRIFFYVRRRVQRMAEHVSCHPRYRETTLSLVKTVVIILGAFVVCWTPGQVVLLLDGLGCKSCNVLAVEKYFLLLAEANSLVNAAVYSCRDAEMRRTFRRLLCCACLRRSTRESAHYTSSAQGGASTRIMLPENGHPLMDSTL.

Residues 1 to 30 lie on the Extracellular side of the membrane; it reads MGHCYYNETIGFFYNNSGKELSSHWRPKDV. Residues Asn-7 and Asn-15 are each glycosylated (N-linked (GlcNAc...) asparagine). The chain crosses the membrane as a helical span at residues 31–51; the sequence is VVVALGLTVSVLVLLTNLLVI. At 52 to 66 the chain is on the cytoplasmic side; it reads AAIASNRRFHQPIYY. The helical transmembrane segment at 67–87 threads the bilayer; the sequence is LLGNLAAADLFAGVAYLFLMF. The Extracellular portion of the chain corresponds to 88-104; that stretch reads HTGPRTARLSLEGWFLR. The chain crosses the membrane as a helical span at residues 105–124; it reads QGLLDTSLTASVATLLAIAV. Topologically, residues 125 to 143 are cytoplasmic; the sequence is ERRRSVMAVQLHSRLPRGR. Residues 144–164 traverse the membrane as a helical segment; the sequence is VVMLIVGVWVAALGLGLLPAH. Topologically, residues 165–185 are extracellular; that stretch reads SWHCLCALDRCSRMAPLLSRS. Residues 186–206 form a helical membrane-spanning segment; the sequence is YLAVWALSSLLVFLLMVAVYT. Residues 207–239 lie on the Cytoplasmic side of the membrane; that stretch reads RIFFYVRRRVQRMAEHVSCHPRYRETTLSLVKT. Residues 240 to 260 form a helical membrane-spanning segment; the sequence is VVIILGAFVVCWTPGQVVLLL. Topologically, residues 261-276 are extracellular; the sequence is DGLGCKSCNVLAVEKY. Residues 277-294 traverse the membrane as a helical segment; the sequence is FLLLAEANSLVNAAVYSC. At 295-348 the chain is on the cytoplasmic side; sequence RDAEMRRTFRRLLCCACLRRSTRESAHYTSSAQGGASTRIMLPENGHPLMDSTL. A lipid anchor (S-palmitoyl cysteine) is attached at Cys-308. Residues 345 to 348 carry the PDZ-binding motif; it reads DSTL.

This sequence belongs to the G-protein coupled receptor 1 family. In terms of assembly, interacts with SLC9A3R2/NHERF2, MAGI3 and PLCB3. Interacts with RALA and GRK2.

The protein localises to the cell surface. Its subcellular location is the cell membrane. Its function is as follows. Receptor for lysophosphatidic acid (LPA), a mediator of diverse cellular activities. Seems to be coupled to the G(i)/G(o), G(12)/G(13), and G(q) families of heteromeric G proteins. Plays a key role in phospholipase C-beta (PLC-beta) signaling pathway. Stimulates phospholipase C (PLC) activity in a manner that is independent of RALA activation. The sequence is that of Lysophosphatidic acid receptor 2 from Macaca fascicularis (Crab-eating macaque).